A 685-amino-acid polypeptide reads, in one-letter code: Amino acid transporter heavy chain SLC3A1 (685 aa).

Residues 1-11 (MAEDKSKRDSI) show a composition bias toward basic and acidic residues. The interval 1-56 (MAEDKSKRDSIEMSMKGCQTNNGFVHNEDILEQTPDPGSSTDNLKHSTRGILGSQE) is disordered. The Cytoplasmic portion of the chain corresponds to 1-87 (MAEDKSKRDS…GQARYRIPRE (87 aa)). S10 is modified (phosphoserine). A helical; Signal-anchor for type II membrane protein membrane pass occupies residues 88–108 (ILFWLTVASVLVLIAATIAII). At 109-685 (ALSPKCLDWW…SVLNILYTSC (577 aa)) the chain is on the extracellular side. N214 provides a ligand contact to Ca(2+). 2 N-linked (GlcNAc...) asparagine glycosylation sites follow: N214 and N261. C242 and C273 are oxidised to a cystine. Residues D284, F318, L319, and E321 each contribute to the Ca(2+) site. N332, N495, N513, and N575 each carry an N-linked (GlcNAc...) asparagine glycan. 2 disulfide bridges follow: C571–C666 and C673–C685.

In terms of assembly, disulfide-linked heterodimer composed of the catalytic light subunit SLC7A9 and the heavy subunit SLC3A1. The heterodimer is the minimal functional unit. Assembles in non-covalently linked heterotetramers (dimers of heterodimers) and higher order oligomers; the oligomerization is mediated by SLC3A1 likely to prevent degradation in the endoplasmic reticulum and facilitate heteromer trafficking to the plasma membrane. Disulfide-linked heterodimer composed of the catalytic light subunit SLC7A13 and the heavy subunit SLC3A1. In terms of tissue distribution, expressed in the brush border membrane in the kidney (at protein level). Predominantly expressed in the kidney, small intestine and pancreas. Weakly expressed in liver.

Its subcellular location is the cell membrane. The protein localises to the apical cell membrane. Its function is as follows. Acts as a chaperone that facilitates biogenesis and trafficking of functional transporter heteromers to the plasma membrane. Associates with SLC7A9 to form a functional transporter complex that mediates the electrogenic exchange between cationic amino acids and neutral amino acids, with a stoichiometry of 1:1. SLC7A9-SLC3A1 transporter has system b(0,+)-like activity with high affinity for extracellular cationic amino acids and L-cystine and lower affinity for intracellular neutral amino acids. Substrate exchange is driven by high concentration of intracellular neutral amino acids and the intracellular reduction of L-cystine to L-cysteine. SLC7A9-SLC3A1 acts as a major transporter for reabsorption of L-cystine and dibasic amino acids across the brush border membrane in early proximal tubules. Associates with SLC7A13 to form a functional complex that transports anionic and neutral amino acids via exchange or facilitated diffusion. SLC7A13-SLC3A1 may act as a major transporter for L-cystine in late proximal tubules, ensuring its reabsorption from the luminal fluid in exchange for cytosolic L-glutamate or L-aspartate. The protein is Amino acid transporter heavy chain SLC3A1 of Homo sapiens (Human).